The chain runs to 308 residues: Uridylate cyclase (308 aa).

Positions 62 and 106 each coordinate Mn(2+).

Belongs to the adenylyl cyclase class-4/guanylyl cyclase family. Pyrimidine cyclase subfamily. As to quaternary structure, homodimer. It depends on Mn(2+) as a cofactor.

It localises to the cytoplasm. The catalysed reaction is GTP = 3',5'-cyclic GMP + diphosphate. The enzyme catalyses UTP = 3',5'-cyclic UMP + diphosphate. Pycsar (pyrimidine cyclase system for antiphage resistance) provides immunity against bacteriophage. The pyrimidine cyclase (PycC) synthesizes cyclic nucleotides in response to infection; these serve as specific second messenger signals. The signals activate the adjacent effector, leading to bacterial cell death and abortive phage infection. A clade D Pycsar system. Its function is as follows. The pyrimidine cyclase gene of a two-gene Pycsar system, generates cyclic UMP (cUMP) from UTP as well as cGMP from GTP to a lesser extent, has little to no activity on ATP or CTP. Expression of this and adjacent effector PtPycTM (AC A0A4Q9KQH5) probably confers resistance to bacteriophage. The genes are probably only expressed in response to bacteriophage infection. The protein is Uridylate cyclase of Propioniciclava tarda.